A 660-amino-acid chain; its full sequence is Interferon-induced GTP-binding protein Mx1 (660 aa).

Residue methionine 1 is modified to N-acetylmethionine. Residues 1–10 (MVHSEAKMTR) are compositionally biased toward basic and acidic residues. Residues 1–29 (MVHSEAKMTRPDSASASKQQLLNGNADIQ) form a disordered region. The segment covering 12–29 (DSASASKQQLLNGNADIQ) has biased composition (polar residues). The 274-residue stretch at 67 to 340 (DLALPAIAVI…LITHISKSLP (274 aa)) folds into the Dynamin-type G domain. The G1 motif stretch occupies residues 77–84 (GDQSSGKS). Residue 77–84 (GDQSSGKS) coordinates GTP. Residues 102 to 104 (VTR) are G2 motif. The tract at residues 178–181 (DLPG) is G3 motif. GTP is bound by residues 178 to 182 (DLPGI) and 247 to 250 (TKPD). A G4 motif region spans residues 247 to 250 (TKPD). The segment at 279–282 (KCRG) is G5 motif. Residues 341–366 (LLENQIKESYQNLSDELQKYGTDIPE) form a bundle signaling element (BSE) region. The tract at residues 366 to 533 (EDETEKTFFL…HFQMEKIVYC (168 aa)) is middle domain. Positions 367-630 (DETEKTFFLI…RDTYDWLLKE (264 aa)) are stalk. The critical for lipid-binding stretch occupies residues 554-557 (KKKK). Residues 572–660 (MAEILEHLNA…ARRRLAKFPG (89 aa)) form the GED domain.

The protein belongs to the TRAFAC class dynamin-like GTPase superfamily. Dynamin/Fzo/YdjA family. As to quaternary structure, homooligomer. Oligomerizes into multimeric filamentous or ring-like structures by virtue of its stalk domain. Oligomerization is critical for GTPase activity, protein stability, and recognition of viral target structures. Interacts with TRPC1, TRPC3, TRPC4, TRPC5, TRPC6 and TRPC7. Interacts with HSPA5. Interacts with TUBB/TUBB5. Interacts with DDX39A and DDX39B. Post-translationally, ISGylated.

The protein resides in the cytoplasm. Its subcellular location is the endoplasmic reticulum membrane. It is found in the perinuclear region. In terms of biological role, interferon-induced dynamin-like GTPase with antiviral activity. The sequence is that of Interferon-induced GTP-binding protein Mx1 (MX1) from Equus caballus (Horse).